The primary structure comprises 762 residues: cGMP-dependent protein kinase 2 (762 aa).

Residues 1–26 (MGNGSVKPKHAKHPDGHSGNLSNEAL) are disordered. Glycine 2 is lipidated: N-myristoyl glycine. Residues serine 110 and serine 117 each carry the phosphoserine modification. Residues 118 to 138 (RRGAKAGVSAEPTTRTYDLNK) form a disordered region. Positions 168 to 283 (FLKRLDPQQI…DEEYRNFLRS (116 aa)) are cGMP-binding, high affinity; cAMP-binding, moderate affinity. Residues 232–235 (GELA), 242–243 (RT), lysine 347, 356–359 (GEKA), 366–367 (RS), aspartate 412, and arginine 415 each bind 3',5'-cyclic GMP. The cGMP-binding, high affinity; cAMP-binding, low affinity stretch occupies residues 286 to 416 (LLKNLPEDKL…TLNRDDEKRH (131 aa)). Position 431 is a phosphoserine (serine 431). The Protein kinase domain occupies 453 to 711 (LEIIATLGVG…INDIKKHRWL (259 aa)). Residues 459–467 (LGVGGFGRV) and lysine 482 contribute to the ATP site. Aspartate 576 acts as the Proton acceptor in catalysis. At threonine 609 the chain carries Phosphothreonine. The AGC-kinase C-terminal domain occupies 712-762 (NGFNWEGLKARSLPSPLRRELSGPIDHSYFDKYPPEKGVPPDEMSGWDKDF). The disordered stretch occupies residues 740-762 (YFDKYPPEKGVPPDEMSGWDKDF).

Belongs to the protein kinase superfamily. AGC Ser/Thr protein kinase family. cGMP subfamily. In terms of assembly, interacts with GRIA1/GLUR1. Post-translationally, myristoylation mediates membrane localization.

Its subcellular location is the apical cell membrane. The protein localises to the cell membrane. The catalysed reaction is L-seryl-[protein] + ATP = O-phospho-L-seryl-[protein] + ADP + H(+). It catalyses the reaction L-threonyl-[protein] + ATP = O-phospho-L-threonyl-[protein] + ADP + H(+). With respect to regulation, binding of cGMP results in enzyme activation. Its function is as follows. Crucial regulator of intestinal secretion and bone growth. Phosphorylates and activates CFTR on the plasma membrane. Plays a key role in intestinal secretion by regulating cGMP-dependent translocation of CFTR in jejunum. Acts downstream of NMDAR to activate the plasma membrane accumulation of GRIA1/GLUR1 in synapse and increase synaptic plasticity. Phosphorylates GRIA1/GLUR1 at Ser-863. Acts as a regulator of gene expression and activator of the extracellular signal-regulated kinases MAPK3/ERK1 and MAPK1/ERK2 in mechanically stimulated osteoblasts. Under fluid shear stress, mediates ERK activation and subsequent induction of FOS, FOSL1/FRA1, FOSL2/FRA2 and FOSB that play a key role in the osteoblast anabolic response to mechanical stimulation. This is cGMP-dependent protein kinase 2 (Prkg2) from Mus musculus (Mouse).